We begin with the raw amino-acid sequence, 590 residues long: ATP-dependent zinc metalloprotease FtsH 1 (590 aa).

Topologically, residues 1–8 are cytoplasmic; it reads MLKLTKKQ. The chain crosses the membrane as a helical span at residues 9–29; the sequence is LIIVLGIAIVVVSAIGYAVYT. The Extracellular segment spans residues 30–103; it reads QYFNEDKLEI…QVRETTDQYS (74 aa). The helical transmembrane segment at 104-124 threads the bilayer; it reads VVQVITFVVLIGGFIGVAIFL. Topologically, residues 125-590 are cytoplasmic; sequence SKKNATQTSK…NEIFSGFQSM (466 aa). Residue 195–202 participates in ATP binding; that stretch reads GSPGTGKT. Residue H418 participates in Zn(2+) binding. E419 is a catalytic residue. The Zn(2+) site is built by H422 and D496.

This sequence in the central section; belongs to the AAA ATPase family. In the C-terminal section; belongs to the peptidase M41 family. As to quaternary structure, homohexamer. Requires Zn(2+) as cofactor.

It localises to the cell membrane. Acts as a processive, ATP-dependent zinc metallopeptidase for both cytoplasmic and membrane proteins. Plays a role in the quality control of integral membrane proteins. The sequence is that of ATP-dependent zinc metalloprotease FtsH 1 from Alkaliphilus metalliredigens (strain QYMF).